The following is a 460-amino-acid chain: 2-methylcitrate synthase, mitochondrial (460 aa).

A mitochondrion-targeting transit peptide spans 1-24 (MALPLRTARHASRLAQTIGRRGYA). CoA is bound by residues arginine 69 and lysine 187. Histidine 264 provides a ligand contact to oxaloacetate. Leucine 299 is a binding site for CoA. Histidine 300 is a catalytic residue. Residues valine 341, glycine 343, and tyrosine 344 each contribute to the CoA site. 2 residues coordinate oxaloacetate: histidine 346 and arginine 355. Residue histidine 346 is part of the active site. The CoA site is built by threonine 395, lysine 396, and asparagine 401. Aspartate 403 is a catalytic residue. Positions 429 and 449 each coordinate oxaloacetate.

This sequence belongs to the citrate synthase family. Homodimer.

Its subcellular location is the mitochondrion matrix. The enzyme catalyses propanoyl-CoA + oxaloacetate + H2O = (2S,3S)-2-methylcitrate + CoA + H(+). It carries out the reaction oxaloacetate + acetyl-CoA + H2O = citrate + CoA + H(+). Its pathway is organic acid metabolism; propanoate degradation. With respect to regulation, partially inhibited by ATP. In terms of biological role, catalyzes the synthesis of (2S,3S)-2-methylcitrate from propionyl-CoA and oxaloacetate and also from acetyl-CoA and oxaloacetate with a greater efficiency. Also has citrate synthase activity and can substitute for the loss of citA activity. This Emericella nidulans (strain FGSC A4 / ATCC 38163 / CBS 112.46 / NRRL 194 / M139) (Aspergillus nidulans) protein is 2-methylcitrate synthase, mitochondrial.